The primary structure comprises 150 residues: Lipoprotein signal peptidase (150 aa).

3 consecutive transmembrane segments (helical) span residues 5 to 25 (LSLV…NWIV), 59 to 79 (QQWF…WFLW), and 83 to 103 (AQNW…GNFI). Active-site residues include Asp113 and Asp129. Residues 124–144 (IFNIADILLSVGFVLLFIAIL) form a helical membrane-spanning segment.

The protein belongs to the peptidase A8 family.

It is found in the cell membrane. The catalysed reaction is Release of signal peptides from bacterial membrane prolipoproteins. Hydrolyzes -Xaa-Yaa-Zaa-|-(S,diacylglyceryl)Cys-, in which Xaa is hydrophobic (preferably Leu), and Yaa (Ala or Ser) and Zaa (Gly or Ala) have small, neutral side chains.. It functions in the pathway protein modification; lipoprotein biosynthesis (signal peptide cleavage). This protein specifically catalyzes the removal of signal peptides from prolipoproteins. The chain is Lipoprotein signal peptidase from Lactococcus lactis subsp. lactis (strain IL1403) (Streptococcus lactis).